A 230-amino-acid chain; its full sequence is Ribonuclease 3 (230 aa).

In terms of domain architecture, RNase III spans 1–134 (MKQLEELLST…FLGALLLDKG (134 aa)). Glutamate 47 provides a ligand contact to Mg(2+). Residue aspartate 51 is part of the active site. Mg(2+)-binding residues include aspartate 120 and glutamate 123. Glutamate 123 is an active-site residue. Residues 160–229 (DYKTCLQEFL…AKNALAQLSE (70 aa)) enclose the DRBM domain.

It belongs to the ribonuclease III family. Homodimer. The cofactor is Mg(2+).

It localises to the cytoplasm. The enzyme catalyses Endonucleolytic cleavage to 5'-phosphomonoester.. Functionally, digests double-stranded RNA. Involved in the processing of primary rRNA transcript to yield the immediate precursors to the large and small rRNAs (23S and 16S). Processes some mRNAs, and tRNAs when they are encoded in the rRNA operon. Processes pre-crRNA and tracrRNA of type II CRISPR loci if present in the organism. The sequence is that of Ribonuclease 3 from Streptococcus pyogenes serotype M28 (strain MGAS6180).